The primary structure comprises 79 residues: Toxin 3FTx-Oxy5 (79 aa).

Positions 1-23 (MKTLLLTLVVMTIVCLDLGYTLT) are cleaved as a signal peptide. Intrachain disulfides connect C24-C41, C34-C59, C63-C71, and C72-C77.

The protein belongs to the three-finger toxin family. Short-chain subfamily. As to expression, expressed by the venom gland.

It is found in the secreted. The chain is Toxin 3FTx-Oxy5 from Oxyuranus microlepidotus (Inland taipan).